The primary structure comprises 261 residues: 7beta-hydroxysteroid dehydrogenase (261 aa).

Residues 17–21 (TEGIG), 40–41 (RR), and 66–67 (DL) contribute to the NADP(+) site. The Proton acceptor role is filled by Y156.

This sequence belongs to the short-chain dehydrogenases/reductases (SDR) family. Homodimer.

It catalyses the reaction a 7beta-hydroxysteroid + NADP(+) = a 7-oxosteroid + NADPH + H(+). The catalysed reaction is ursocholate + NADP(+) = 3alpha,12alpha-dihydroxy-7-oxo-5beta-cholanate + NADPH + H(+). It carries out the reaction 7-oxolithocholate + NADPH + H(+) = ursodeoxycholate + NADP(+). The enzyme catalyses 3alpha,7beta-dihydroxy-12-oxo-5beta-cholan-24-oate + NADP(+) = 7,12-dioxo-lithocholate + NADPH + H(+). It catalyses the reaction 7beta-hydroxy-3,12-dioxo-5beta-cholan-24-oate + NADP(+) = dehydrocholate + NADPH + H(+). Its function is as follows. 7beta-hydroxysteroid dehydrogenase that catalyzes the reduction of the 7-oxo group of 7-oxosteroids, such as 3alpha,12alpha-dihydroxy-7-oxo-5beta-cholanate, 7-oxolithocholate, 7,12-dioxo-lithocholate and dehydrocholate, to the corresponding 7beta-hydroxysteroids. Is also able to catalyze the reverse oxidation reactions. Together with 7alpha-HSDH encoded in the adjacent gene, is likely involved in the epimerization of the hydroxy group at C-7 of primary bile acids through 7-keto bile acid intermediates. In Clostridium sardiniense (Clostridium absonum), this protein is 7beta-hydroxysteroid dehydrogenase.